Here is an 876-residue protein sequence, read N- to C-terminus: Alanine--tRNA ligase (876 aa).

Zn(2+) is bound by residues histidine 565, histidine 569, cysteine 667, and histidine 671.

Belongs to the class-II aminoacyl-tRNA synthetase family. It depends on Zn(2+) as a cofactor.

The protein localises to the cytoplasm. The catalysed reaction is tRNA(Ala) + L-alanine + ATP = L-alanyl-tRNA(Ala) + AMP + diphosphate. Catalyzes the attachment of alanine to tRNA(Ala) in a two-step reaction: alanine is first activated by ATP to form Ala-AMP and then transferred to the acceptor end of tRNA(Ala). Also edits incorrectly charged Ser-tRNA(Ala) and Gly-tRNA(Ala) via its editing domain. The protein is Alanine--tRNA ligase of Staphylococcus aureus (strain USA300).